Consider the following 603-residue polypeptide: DNA mismatch repair protein MutL (603 aa).

Basic and acidic residues predominate over residues 337 to 347; sequence ISKKQKEDQKS. The disordered stretch occupies residues 337-383; sequence ISKKQKEDQKSEQIQMSFEENKPVKETPTLFSKPTIPEYVPSDEDAP.

It belongs to the DNA mismatch repair MutL/HexB family.

Its function is as follows. This protein is involved in the repair of mismatches in DNA. It is required for dam-dependent methyl-directed DNA mismatch repair. May act as a 'molecular matchmaker', a protein that promotes the formation of a stable complex between two or more DNA-binding proteins in an ATP-dependent manner without itself being part of a final effector complex. In Listeria monocytogenes serotype 4b (strain F2365), this protein is DNA mismatch repair protein MutL.